The primary structure comprises 405 residues: Phosphatidylinositol 5-phosphate 4-kinase type-2 alpha (405 aa).

A2 is subject to N-acetylalanine. T3 bears the Phosphothreonine mark. S14 is subject to Phosphoserine. A PIPK domain is found at 33 to 405; the sequence is ASDPLLSVLM…RFLDFIGHIL (373 aa). The segment at 59–65 is required for interaction with PIP5K1A; it reads VMLMPDD. K89 and K145 each carry N6-acetyllysine. The tract at residues 288–328 is disordered; that stretch reads QEEVECEENDGEEEGESDSTHPIGTPPDSPGNTLNSSPPLA. The segment covering 289 to 304 has biased composition (acidic residues); the sequence is EEVECEENDGEEEGES.

Homodimer. Interacts with PIP4K2B; the interaction may regulate localization to the nucleus. Probably interacts with PIP5K1A; the interaction inhibits PIP5K1A kinase activity. Phosphorylated in tyrosines. Phosphorylation is induced by light and increases kinase activity. As to expression, detected in rod photoreceptor cells.

The protein resides in the cell membrane. It is found in the nucleus. Its subcellular location is the lysosome. The protein localises to the cytoplasm. It localises to the photoreceptor inner segment. The protein resides in the cell projection. It is found in the cilium. Its subcellular location is the photoreceptor outer segment. The enzyme catalyses a 1,2-diacyl-sn-glycero-3-phospho-(1D-myo-inositol-5-phosphate) + ATP = a 1,2-diacyl-sn-glycero-3-phospho-(1D-myo-inositol-4,5-bisphosphate) + ADP + H(+). It carries out the reaction 1,2-dihexadecanoyl-sn-glycero-3-phospho-(1D-myo-inositol-5-phosphate) + ATP = 1,2-dihexadecanoyl-sn-glycero-3-phospho-(1D-myo-inositol-4,5-bisphosphate) + ADP + H(+). The catalysed reaction is 1,2-dihexadecanoyl-sn-glycero-3-phospho-(1D-myo-inositol-5-phosphate) + GTP = 1,2-dihexadecanoyl-sn-glycero-3-phospho-(1D-myo-inositol-4,5-bisphosphate) + GDP + H(+). With respect to regulation, in rod outer segments, activated by light. In terms of biological role, catalyzes the phosphorylation of phosphatidylinositol 5-phosphate (PtdIns5P) on the fourth hydroxyl of the myo-inositol ring, to form phosphatidylinositol 4,5-bisphosphate (PtdIns(4,5)P2). Has both ATP- and GTP-dependent kinase activities. May exert its function by regulating the levels of PtdIns5P, which functions in the cytosol by increasing AKT activity and in the nucleus signals through ING2. May regulate the pool of cytosolic PtdIns5P in response to the activation of tyrosine phosphorylation. Required for lysosome-peroxisome membrane contacts and intracellular cholesterol transport through modulating peroxisomal PtdIns(4,5)P2 level. In collaboration with PIP4K2B, has a role in mediating autophagy in times of nutrient stress. Required for autophagosome-lysosome fusion and the regulation of cellular lipid metabolism. Negatively regulates insulin signaling through a catalytic-independent mechanism. PIP4Ks interact with PIP5Ks and suppress PIP5K-mediated PtdIns(4,5)P2 synthesis and insulin-dependent conversion to PtdIns(3,4,5)P3. May be involved in thrombopoiesis, and the terminal maturation of megakaryocytes and regulation of their size. The polypeptide is Phosphatidylinositol 5-phosphate 4-kinase type-2 alpha (Mus musculus (Mouse)).